A 153-amino-acid chain; its full sequence is Arginine repressor (153 aa).

It belongs to the ArgR family.

The protein localises to the cytoplasm. It participates in amino-acid biosynthesis; L-arginine biosynthesis [regulation]. Its function is as follows. Regulates arginine biosynthesis genes. The sequence is that of Arginine repressor from Actinobacillus pleuropneumoniae serotype 5b (strain L20).